Reading from the N-terminus, the 73-residue chain is Small ribosomal subunit protein bS18c (73 aa).

Belongs to the bacterial ribosomal protein bS18 family. In terms of assembly, part of the 30S ribosomal subunit.

Its subcellular location is the plastid. It is found in the chloroplast. The chain is Small ribosomal subunit protein bS18c from Rhodomonas salina (Cryptomonas salina).